The primary structure comprises 311 residues: Geranylgeranyl transferase type-2 subunit beta (311 aa).

5 PFTB repeats span residues 54-95, 102-143, 150-191, 197-239, and 246-288; these read KERI…AMLD, KDKV…AILG, KNTA…KILN, DEEL…AIIG, and RNQL…SLLQ. Geranylgeranyl diphosphate is bound by residues 176-178 and 218-230; these read HGA and RPEKLPDSCYGWW. 3 residues coordinate Zn(2+): Asp-224, Cys-226, and His-276.

It belongs to the protein prenyltransferase subunit beta family. As to quaternary structure, heterodimer of an alpha and a beta subunit. It depends on Zn(2+) as a cofactor.

It carries out the reaction geranylgeranyl diphosphate + L-cysteinyl-[protein] = S-geranylgeranyl-L-cysteinyl-[protein] + diphosphate. Its function is as follows. Catalyzes the transfer of a geranyl-geranyl moiety from geranyl-geranyl pyrophosphate to proteins having the C-terminal -XCC or -XCXC, where both cysteines may become modified. The protein is Geranylgeranyl transferase type-2 subunit beta (ptb1) of Schizosaccharomyces pombe (strain 972 / ATCC 24843) (Fission yeast).